The following is a 294-amino-acid chain: Osteopontin (294 aa).

Residues 1–16 form the signal peptide; sequence MRLAVICFCLFGIASS. Ser-24, Ser-26, Ser-27, Ser-61, Ser-62, Ser-75, Ser-77, Ser-80, Ser-106, Ser-109, Ser-112, Ser-115, and Ser-118 each carry phosphoserine. The disordered stretch occupies residues 42-274; that stretch reads WLVPDPSQKQ…LVLDPKSKED (233 aa). Positions 48–61 are enriched in polar residues; sequence SQKQNLLAPQNAVS. Acidic residues predominate over residues 85-110; the sequence is DDDDDDDDDDGDHAESEDSVDSDESD. Positions 121-130 are enriched in polar residues; sequence TVTASTQADT. O-linked (GalNAc...) threonine glycans are attached at residues Thr-123, Thr-132, and Thr-137. The Cell attachment site signature appears at 144–146; sequence RGD. Phosphothreonine occurs at positions 170 and 175. The span at 174 to 187 shows a compositional bias: basic and acidic residues; that stretch reads LTSHMKSGESKESL. Residues Ser-176, Ser-180, Ser-200, Ser-209, Ser-213, and Ser-219 each carry the phosphoserine modification. Over residues 197–216 the composition is skewed to polar residues; sequence SMPSDQDNNGKGSHESSQLD. An O-linked (Xyl...) (chondroitin sulfate) serine glycan is attached at Ser-219. Basic and acidic residues predominate over residues 220–232; sequence LETHRLEHSKESQ. A Phosphothreonine modification is found at Thr-222. Phosphoserine is present on residues Ser-228, Ser-231, Ser-234, Ser-238, Ser-243, Ser-247, Ser-250, Ser-255, Ser-260, Ser-271, Ser-283, Ser-288, Ser-290, and Ser-291. Residues 234–249 show a composition bias toward polar residues; it reads SADQSDVIDSQASSKA. Positions 263 to 274 are enriched in basic and acidic residues; that stretch reads DKLVLDPKSKED. O-linked (Xyl...) (chondroitin sulfate) serine glycosylation is present at Ser-288.

The protein belongs to the osteopontin family. Interacts (via N-terminus) with integrin ITGA9:ITGB1. Post-translationally, extensively phosphorylated by FAM20C in the extracellular medium at multiple sites within the S-x-E/pS motif. The phosphorylated form inhibits hydroxyapatite crystallization. Dephosphorylation via a mechanism involving ALPL/TNAP promotes hydroxyapatite crystallization. In terms of processing, O-glycosylated. Forms covalent cross-links mediated by transglutaminase TGM2, between a glutamine and the epsilon-amino group of a lysine residue, forming homopolymers and heteropolymers, increasing its collagen binding properties.

Its subcellular location is the secreted. Functionally, major non-collagenous bone protein that binds tightly to hydroxyapatite. Appears to form an integral part of the mineralized matrix. Probably important to cell-matrix interaction. Its function is as follows. Acts as a cytokine involved in enhancing production of interferon-gamma and interleukin-12 and reducing production of interleukin-10 and is essential in the pathway that leads to type I immunity. This chain is Osteopontin (Spp1), found in Mus musculus (Mouse).